A 314-amino-acid chain; its full sequence is MASNLRELRERRNSVATTKKITRAMELIASSRIIKAQNTVKAAGPYSLELTRALSAVAAHTHEEHPLTSMNPDPKRSAVLVITSDRGLAGAYSSNVIRTAEELTTALQPKQEIATYLCGRKAVQYFEFRGRKVDHLWSGFSDSPSYRDAKDIADHLIEDFLRPTEEGGVDEIHMVYTEFESMLTQTPKVIRLLPLAVVDPQDTPEGQLAEGDPGVGANAEEIFHEYRFEPNPVSVLDELLPLYVANRVHYALLQSAASELASRQRAMKAATDNAEQLIQTLTRQANQARQAAITQEITEIVGGAAALAESAPQE.

The protein belongs to the ATPase gamma chain family. As to quaternary structure, F-type ATPases have 2 components, CF(1) - the catalytic core - and CF(0) - the membrane proton channel. CF(1) has five subunits: alpha(3), beta(3), gamma(1), delta(1), epsilon(1). CF(0) has three main subunits: a, b and c.

It localises to the cell membrane. Its function is as follows. Produces ATP from ADP in the presence of a proton gradient across the membrane. The gamma chain is believed to be important in regulating ATPase activity and the flow of protons through the CF(0) complex. In Cutibacterium acnes (strain DSM 16379 / KPA171202) (Propionibacterium acnes), this protein is ATP synthase gamma chain.